Here is a 185-residue protein sequence, read N- to C-terminus: Large ribosomal subunit protein uL5c (185 aa).

This sequence belongs to the universal ribosomal protein uL5 family. Part of the 50S ribosomal subunit; contacts the 5S rRNA.

The protein localises to the plastid. Its subcellular location is the chloroplast. Binds 5S rRNA, forms part of the central protuberance of the 50S subunit. The chain is Large ribosomal subunit protein uL5c (rpl5) from Chlorokybus atmophyticus (Soil alga).